The following is a 317-amino-acid chain: MAFRIPFAQSFWQEYLSGQEANLPRLPEVEQVTETVMRILGGNPGRMQLQGTNTYLVGTGKFRILIDTGQGEASWIEALTKQLEANGLEISHVLLTHWHGDHTGGVPDLITYNPELSSRVYKNTPDLGQQAIHDGQKFHVEGATIRAVFTPGHAFDHMCFLLEEENALFTGDNVLGHGYSVVEDLGTYMTSLTRMADLNCALGYPAHGTRIEDLPAKMKEYIQHKESRMRQVLAALERSRARMTATGGGRRAGALTFPELINSMYGGIPDEIEQALTPFLSQVLWKLAEDRKVGFEGEPSQRRWFAVGPPAATAVRL.

The Zn(2+) site is built by histidine 97, histidine 99, aspartate 101, and histidine 102. The active-site Proton donor/acceptor is aspartate 101.

The protein belongs to the metallo-beta-lactamase superfamily. Zn(2+) serves as cofactor.

It carries out the reaction 3-(2,4-dioxopentyl)-2,3,6,8,9-pentahydroxy-1-oxo-1,2,3,4-tetrahydroanthracene-2-carboxyl-[ACP] = 2-acetyl-3,4a,8,10,11,12a-hexahydroxy-1,4,4a,5,12,12a-hexahydrotetracene-1,12-dione + holo-[ACP] + H(+). The protein operates within secondary metabolite biosynthesis. Its function is as follows. Lactamase-like protein; part of the gene cluster that mediates the biosynthesis of the linear tetracyclic TAN-1612 neuropeptide Y receptor antagonist. The decaketide backbone of TAN-1612 is synthesized by the non-reducing polyketide synthase adaA via condensation of one acetyl-CoA starter unit with 9 malonyl-CoA units. The FAD-dependent monooxygenase adaC then performs hydroxylation at C2 while the polaketide chain is still attached to the NRPKS adaA. The alpha-hydroxylation step at C2 appears to be crucial for the following C18-C1 Claisen cyclization and release of the C9-hydroxyl version of TAN-1612 from the NRPKS adaA, two steps performed by the lactamase-like protein adaB. Finally, the O-methyltransferase adaD performs the C9 O-methylation to complete the biosynthesis of TAN-1612. This is Lactamase-like protein adaB from Aspergillus niger (strain ATCC MYA-4892 / CBS 513.88 / FGSC A1513).